A 230-amino-acid chain; its full sequence is Cell division ATP-binding protein FtsE (230 aa).

The ABC transporter domain occupies 4–229 (IEMRDVVKKY…DESKGEYGYD (226 aa)). Residue 37-44 (GPSGAGKS) coordinates ATP.

The protein belongs to the ABC transporter superfamily. Homodimer. Interacts with FtsX; forms a membrane-associated complex. Interacts with pcsB.

The protein resides in the cell membrane. It carries out the reaction ATP + H2O = ADP + phosphate + H(+). Part of the ABC transporter FtsEX involved in cellular division. Has ATPase activity. Essential for cell division and viability. This chain is Cell division ATP-binding protein FtsE, found in Streptococcus pneumoniae serotype 2 (strain D39 / NCTC 7466).